The chain runs to 104 residues: N(4)-acetylcytidine amidohydrolase (104 aa).

One can recognise an ASCH domain in the interval M7–I93. The Proton acceptor role is filled by K22. T25 acts as the Nucleophile in catalysis. E75 acts as the Proton donor in catalysis.

This sequence belongs to the N(4)-acetylcytidine amidohydrolase family.

It carries out the reaction N(4)-acetylcytidine + H2O = cytidine + acetate + H(+). The catalysed reaction is N(4)-acetyl-2'-deoxycytidine + H2O = 2'-deoxycytidine + acetate + H(+). The enzyme catalyses N(4)-acetylcytosine + H2O = cytosine + acetate + H(+). In terms of biological role, catalyzes the hydrolysis of N(4)-acetylcytidine (ac4C). In Vibrio vulnificus (strain YJ016), this protein is N(4)-acetylcytidine amidohydrolase.